The following is a 301-amino-acid chain: t-SNARE affecting a late Golgi compartment protein 2 (301 aa).

Residues 1–279 (MAYRDRTGLY…SHQKNTGRLR (279 aa)) lie on the Cytoplasmic side of the membrane. A coiled-coil region spans residues 92–120 (SDKTEQENEIQRLTIQITQDFQRCQKLLQ). The region spanning 206-268 (DEQAIRHERA…KSAEKELIKA (63 aa)) is the t-SNARE coiled-coil homology domain. A helical; Anchor for type IV membrane protein transmembrane segment spans residues 280–300 (FICFLILLIVALIVILAIKLL). Residue R301 is a topological domain, vesicular.

This sequence belongs to the syntaxin family.

It localises to the golgi apparatus. The protein localises to the trans-Golgi network membrane. It is found in the endosome membrane. In terms of biological role, t-SNARE that functions in transport from the endosome to the late Golgi and on the endocytic pathway. The sequence is that of t-SNARE affecting a late Golgi compartment protein 2 (tlg2) from Schizosaccharomyces pombe (strain 972 / ATCC 24843) (Fission yeast).